The following is a 35-amino-acid chain: MSDIN-like toxin proprotein 1 (35 aa).

Residues 1–10 (MSDINATRLP) constitute a propeptide that is removed on maturation. The cyclopeptide (Ile-Pro) cross-link spans 11 to 20 (IIIVLGLIIP). The propeptide occupies 21–35 (LCVSDIEMILTRGER).

Belongs to the MSDIN fungal toxin family. Processed by the macrocyclase-peptidase enzyme POPB to yield a toxic cyclic decapeptide. POPB first removes 10 residues from the N-terminus. Conformational trapping of the remaining peptide forces the enzyme to release this intermediate rather than proceed to macrocyclization. The enzyme rebinds the remaining peptide in a different conformation and catalyzes macrocyclization of the N-terminal 10 residues.

Its function is as follows. Probable toxin that belongs to the MSDIN-like toxin family responsible for a large number of food poisoning cases and deaths. The protein is MSDIN-like toxin proprotein 1 of Amanita rimosa.